A 218-amino-acid chain; its full sequence is MDSSLKTQEPQVVETSPSPVAQEPPQVADKPAIVPSPIAQEPDNDVPAPGNEFAEFAAGCFWGVELAFQRIPGVTVTEVGYTHGISHNPSYEDVCTNTTNHAEVVRVQYDPKECTYETLLDLFWSRHNPTTLNRQGELLGAQYRSGIYFYTPEQEKLARESLEKEQKKLEDKIVTEILPAKKFYKAEEYHQQYLVKGGMHGNAQSPAKSCKDPIRCYG.

Polar residues predominate over residues 1-19; the sequence is MDSSLKTQEPQVVETSPSP. The segment at 1 to 30 is disordered; it reads MDSSLKTQEPQVVETSPSPVAQEPPQVADK. S205 bears the Phosphoserine mark.

This sequence belongs to the MsrA Met sulfoxide reductase family.

It localises to the cytoplasm. Its subcellular location is the cytosol. It carries out the reaction L-methionyl-[protein] + [thioredoxin]-disulfide + H2O = L-methionyl-(S)-S-oxide-[protein] + [thioredoxin]-dithiol. The enzyme catalyses [thioredoxin]-disulfide + L-methionine + H2O = L-methionine (S)-S-oxide + [thioredoxin]-dithiol. Activated during dark in short day conditions. In terms of biological role, catalyzes the reduction of methionine sulfoxide (MetSO) to methionine in proteins. Plays a protective role against oxidative stress by restoring activity to proteins that have been inactivated by methionine oxidation. Prevents cellular oxidative damage in long nights. MSRA family specifically reduces the MetSO S-enantiomer. The sequence is that of Peptide methionine sulfoxide reductase A2 (MRSA2) from Arabidopsis thaliana (Mouse-ear cress).